The sequence spans 461 residues: Bifunctional protein GlmU (461 aa).

Residues 1–229 are pyrophosphorylase; the sequence is MEKYVVVLAA…FSESLGVNDR (229 aa). UDP-N-acetyl-alpha-D-glucosamine contacts are provided by residues 8-11, Lys22, Gln72, and 77-78; these read LAAG and GT. Asp102 provides a ligand contact to Mg(2+). Residues Gly139, Glu154, Asn169, and Asn227 each coordinate UDP-N-acetyl-alpha-D-glucosamine. A Mg(2+)-binding site is contributed by Asn227. Residues 230–250 are linker; the sequence is IALAEATRIMQRRINEGHMRD. An N-acetyltransferase region spans residues 251–461; sequence GVTFIDPATA…LPLSEDEEWK (211 aa). 2 residues coordinate UDP-N-acetyl-alpha-D-glucosamine: Arg332 and Lys350. The active-site Proton acceptor is the His362. 2 residues coordinate UDP-N-acetyl-alpha-D-glucosamine: Tyr365 and Asn376. The acetyl-CoA site is built by Ala422 and Arg439.

In the N-terminal section; belongs to the N-acetylglucosamine-1-phosphate uridyltransferase family. This sequence in the C-terminal section; belongs to the transferase hexapeptide repeat family. In terms of assembly, homotrimer. The cofactor is Mg(2+).

It is found in the cytoplasm. It carries out the reaction alpha-D-glucosamine 1-phosphate + acetyl-CoA = N-acetyl-alpha-D-glucosamine 1-phosphate + CoA + H(+). The catalysed reaction is N-acetyl-alpha-D-glucosamine 1-phosphate + UTP + H(+) = UDP-N-acetyl-alpha-D-glucosamine + diphosphate. Its pathway is nucleotide-sugar biosynthesis; UDP-N-acetyl-alpha-D-glucosamine biosynthesis; N-acetyl-alpha-D-glucosamine 1-phosphate from alpha-D-glucosamine 6-phosphate (route II): step 2/2. It functions in the pathway nucleotide-sugar biosynthesis; UDP-N-acetyl-alpha-D-glucosamine biosynthesis; UDP-N-acetyl-alpha-D-glucosamine from N-acetyl-alpha-D-glucosamine 1-phosphate: step 1/1. The protein operates within bacterial outer membrane biogenesis; LPS lipid A biosynthesis. Its function is as follows. Catalyzes the last two sequential reactions in the de novo biosynthetic pathway for UDP-N-acetylglucosamine (UDP-GlcNAc). The C-terminal domain catalyzes the transfer of acetyl group from acetyl coenzyme A to glucosamine-1-phosphate (GlcN-1-P) to produce N-acetylglucosamine-1-phosphate (GlcNAc-1-P), which is converted into UDP-GlcNAc by the transfer of uridine 5-monophosphate (from uridine 5-triphosphate), a reaction catalyzed by the N-terminal domain. The protein is Bifunctional protein GlmU of Lactobacillus delbrueckii subsp. bulgaricus (strain ATCC 11842 / DSM 20081 / BCRC 10696 / JCM 1002 / NBRC 13953 / NCIMB 11778 / NCTC 12712 / WDCM 00102 / Lb 14).